The chain runs to 439 residues: GTPase Der (439 aa).

EngA-type G domains are found at residues 2–168 (ATVL…EEKG) and 181–357 (IKVA…ASYT). GTP-binding positions include 8 to 15 (GKPNVGKS), 55 to 59 (DTCGV), 118 to 121 (NKTE), 187 to 194 (GRPNVGKS), 234 to 238 (DTAGL), and 300 to 303 (NKWD). One can recognise a KH-like domain in the interval 358–439 (TKVPSSAINS…PIFLKFKRSR (82 aa)).

This sequence belongs to the TRAFAC class TrmE-Era-EngA-EngB-Septin-like GTPase superfamily. EngA (Der) GTPase family. In terms of assembly, associates with the 50S ribosomal subunit.

Its function is as follows. GTPase that plays an essential role in the late steps of ribosome biogenesis. The protein is GTPase Der of Thermotoga petrophila (strain ATCC BAA-488 / DSM 13995 / JCM 10881 / RKU-1).